A 152-amino-acid chain; its full sequence is Interleukin-2 (152 aa).

Residues 1 to 20 (MYRMQLLSCIALTLALVANG) form the signal peptide. An O-linked (GalNAc...) threonine glycan is attached at T23. A disulfide bond links C78 and C126.

The protein belongs to the IL-2 family.

It localises to the secreted. Its function is as follows. Cytokine produced by activated CD4-positive helper T-cells and to a lesser extend activated CD8-positive T-cells and natural killer (NK) cells that plays pivotal roles in the immune response and tolerance. Binds to a receptor complex composed of either the high-affinity trimeric IL-2R (IL2RA/CD25, IL2RB/CD122 and IL2RG/CD132) or the low-affinity dimeric IL-2R (IL2RB and IL2RG). Interaction with the receptor leads to oligomerization and conformation changes in the IL-2R subunits resulting in downstream signaling starting with phosphorylation of JAK1 and JAK3. In turn, JAK1 and JAK3 phosphorylate the receptor to form a docking site leading to the phosphorylation of several substrates including STAT5. This process leads to activation of several pathways including STAT, phosphoinositide-3-kinase/PI3K and mitogen-activated protein kinase/MAPK pathways. Functions as a T-cell growth factor and can increase NK-cell cytolytic activity as well. Promotes strong proliferation of activated B-cells and subsequently immunoglobulin production. Plays a pivotal role in regulating the adaptive immune system by controlling the survival and proliferation of regulatory T-cells, which are required for the maintenance of immune tolerance. Moreover, participates in the differentiation and homeostasis of effector T-cell subsets, including Th1, Th2, Th17 as well as memory CD8-positive T-cells. This is Interleukin-2 (IL2) from Orcinus orca (Killer whale).